Consider the following 320-residue polypeptide: tRNA uridine(34) hydroxylase (320 aa).

The region spanning 123-217 is the Rhodanese domain; it reads EDEDTVILDA…YGKDPETKGQ (95 aa). Cysteine 177 functions as the Cysteine persulfide intermediate in the catalytic mechanism.

Belongs to the TrhO family.

The catalysed reaction is uridine(34) in tRNA + AH2 + O2 = 5-hydroxyuridine(34) in tRNA + A + H2O. Functionally, catalyzes oxygen-dependent 5-hydroxyuridine (ho5U) modification at position 34 in tRNAs. This Staphylococcus haemolyticus (strain JCSC1435) protein is tRNA uridine(34) hydroxylase.